Consider the following 90-residue polypeptide: Hypnin-A3 (90 aa).

Lectin specific for core(alpha 1-6)fucosylated N-glycans. Inhibits platelet aggregation. The polypeptide is Hypnin-A3 (Hypnea japonica (Japanese red alga)).